Consider the following 238-residue polypeptide: Ribitol-5-phosphate cytidylyltransferase 1 (238 aa).

CTP is bound by residues 7–10 (LAGG) and 81–87 (GSDRNDT).

The protein belongs to the IspD/TarI cytidylyltransferase family. TarI subfamily.

The catalysed reaction is D-ribitol 5-phosphate + CTP + H(+) = CDP-L-ribitol + diphosphate. It participates in cell wall biogenesis; poly(ribitol phosphate) teichoic acid biosynthesis. In terms of biological role, catalyzes the transfer of the cytidylyl group of CTP to D-ribitol 5-phosphate. The protein is Ribitol-5-phosphate cytidylyltransferase 1 of Staphylococcus aureus (strain USA300).